Here is a 327-residue protein sequence, read N- to C-terminus: Ferredoxin--NADP reductase (327 aa).

8 residues coordinate FAD: T18, D37, Q45, Y50, A90, F124, D283, and S324.

The protein belongs to the ferredoxin--NADP reductase type 2 family. In terms of assembly, homodimer. Requires FAD as cofactor.

The catalysed reaction is 2 reduced [2Fe-2S]-[ferredoxin] + NADP(+) + H(+) = 2 oxidized [2Fe-2S]-[ferredoxin] + NADPH. This is Ferredoxin--NADP reductase from Saccharopolyspora erythraea (strain ATCC 11635 / DSM 40517 / JCM 4748 / NBRC 13426 / NCIMB 8594 / NRRL 2338).